The sequence spans 466 residues: Ribulose bisphosphate carboxylase large chain (466 aa).

N6,N6,N6-trimethyllysine is present on lysine 5. Substrate-binding residues include asparagine 114 and threonine 164. Lysine 166 functions as the Proton acceptor in the catalytic mechanism. Residue lysine 168 coordinates substrate. Mg(2+)-binding residues include lysine 192, aspartate 194, and glutamate 195. Lysine 192 carries the post-translational modification N6-carboxylysine. The active-site Proton acceptor is histidine 285. The substrate site is built by arginine 286, histidine 318, and serine 370.

Belongs to the RuBisCO large chain family. Type I subfamily. As to quaternary structure, heterohexadecamer of 8 large chains and 8 small chains; disulfide-linked. The disulfide link is formed within the large subunit homodimers. Requires Mg(2+) as cofactor. In terms of processing, the disulfide bond which can form in the large chain dimeric partners within the hexadecamer appears to be associated with oxidative stress and protein turnover.

Its subcellular location is the plastid. The protein resides in the chloroplast. The catalysed reaction is 2 (2R)-3-phosphoglycerate + 2 H(+) = D-ribulose 1,5-bisphosphate + CO2 + H2O. The enzyme catalyses D-ribulose 1,5-bisphosphate + O2 = 2-phosphoglycolate + (2R)-3-phosphoglycerate + 2 H(+). RuBisCO catalyzes two reactions: the carboxylation of D-ribulose 1,5-bisphosphate, the primary event in carbon dioxide fixation, as well as the oxidative fragmentation of the pentose substrate in the photorespiration process. Both reactions occur simultaneously and in competition at the same active site. In Drosera binata (Fork-leaved sundew), this protein is Ribulose bisphosphate carboxylase large chain.